Consider the following 513-residue polypeptide: GMP synthase [glutamine-hydrolyzing] (513 aa).

Positions 8 to 198 (MILVLDFGSQ…VFGVCECVGE (191 aa)) constitute a Glutamine amidotransferase type-1 domain. Cysteine 85 serves as the catalytic Nucleophile. Residues histidine 172 and glutamate 174 contribute to the active site. The GMPS ATP-PPase domain maps to 199-388 (WSMENFIEIE…LGIPDEIVWR (190 aa)). 226–232 (SGGVDSS) serves as a coordination point for ATP.

Homodimer.

It carries out the reaction XMP + L-glutamine + ATP + H2O = GMP + L-glutamate + AMP + diphosphate + 2 H(+). The protein operates within purine metabolism; GMP biosynthesis; GMP from XMP (L-Gln route): step 1/1. Functionally, catalyzes the synthesis of GMP from XMP. The sequence is that of GMP synthase [glutamine-hydrolyzing] from Bacillus licheniformis (strain ATCC 14580 / DSM 13 / JCM 2505 / CCUG 7422 / NBRC 12200 / NCIMB 9375 / NCTC 10341 / NRRL NRS-1264 / Gibson 46).